The following is a 227-amino-acid chain: Cytochrome c oxidase subunit 2 (227 aa).

Residues 1–14 (MAHAAQMGLQDATS) are Mitochondrial intermembrane-facing. A helical membrane pass occupies residues 15–45 (PIMEELISFHDHALMIIFLISFLVLYALFLT). Topologically, residues 46–59 (LTTKLTNTNITDAQ) are mitochondrial matrix. The helical transmembrane segment at 60-87 (EMETVWTILPAIILVLIALPSLRILYLT) threads the bilayer. Residues 88–227 (DEINDPSFTI…IFEMGPVFTL (140 aa)) are Mitochondrial intermembrane-facing. Residues H161, C196, E198, C200, H204, and M207 each coordinate Cu cation. E198 is a Mg(2+) binding site.

The protein belongs to the cytochrome c oxidase subunit 2 family. As to quaternary structure, component of the cytochrome c oxidase (complex IV, CIV), a multisubunit enzyme composed of 14 subunits. The complex is composed of a catalytic core of 3 subunits MT-CO1, MT-CO2 and MT-CO3, encoded in the mitochondrial DNA, and 11 supernumerary subunits COX4I, COX5A, COX5B, COX6A, COX6B, COX6C, COX7A, COX7B, COX7C, COX8 and NDUFA4, which are encoded in the nuclear genome. The complex exists as a monomer or a dimer and forms supercomplexes (SCs) in the inner mitochondrial membrane with NADH-ubiquinone oxidoreductase (complex I, CI) and ubiquinol-cytochrome c oxidoreductase (cytochrome b-c1 complex, complex III, CIII), resulting in different assemblies (supercomplex SCI(1)III(2)IV(1) and megacomplex MCI(2)III(2)IV(2)). Found in a complex with TMEM177, COA6, COX18, COX20, SCO1 and SCO2. Interacts with TMEM177 in a COX20-dependent manner. Interacts with COX20. Interacts with COX16. Requires Cu cation as cofactor.

The protein localises to the mitochondrion inner membrane. The catalysed reaction is 4 Fe(II)-[cytochrome c] + O2 + 8 H(+)(in) = 4 Fe(III)-[cytochrome c] + 2 H2O + 4 H(+)(out). Component of the cytochrome c oxidase, the last enzyme in the mitochondrial electron transport chain which drives oxidative phosphorylation. The respiratory chain contains 3 multisubunit complexes succinate dehydrogenase (complex II, CII), ubiquinol-cytochrome c oxidoreductase (cytochrome b-c1 complex, complex III, CIII) and cytochrome c oxidase (complex IV, CIV), that cooperate to transfer electrons derived from NADH and succinate to molecular oxygen, creating an electrochemical gradient over the inner membrane that drives transmembrane transport and the ATP synthase. Cytochrome c oxidase is the component of the respiratory chain that catalyzes the reduction of oxygen to water. Electrons originating from reduced cytochrome c in the intermembrane space (IMS) are transferred via the dinuclear copper A center (CU(A)) of subunit 2 and heme A of subunit 1 to the active site in subunit 1, a binuclear center (BNC) formed by heme A3 and copper B (CU(B)). The BNC reduces molecular oxygen to 2 water molecules using 4 electrons from cytochrome c in the IMS and 4 protons from the mitochondrial matrix. This chain is Cytochrome c oxidase subunit 2 (MT-CO2), found in Symphalangus syndactylus (Siamang).